Reading from the N-terminus, the 446-residue chain is Glutamyl-tRNA reductase (446 aa).

Residues 49 to 52 (TCNR), serine 108, 113 to 115 (ETQ), and glutamine 119 contribute to the substrate site. Cysteine 50 (nucleophile) is an active-site residue. 188 to 193 (GAGKMS) serves as a coordination point for NADP(+).

It belongs to the glutamyl-tRNA reductase family. In terms of assembly, homodimer.

The enzyme catalyses (S)-4-amino-5-oxopentanoate + tRNA(Glu) + NADP(+) = L-glutamyl-tRNA(Glu) + NADPH + H(+). It participates in porphyrin-containing compound metabolism; protoporphyrin-IX biosynthesis; 5-aminolevulinate from L-glutamyl-tRNA(Glu): step 1/2. Catalyzes the NADPH-dependent reduction of glutamyl-tRNA(Glu) to glutamate 1-semialdehyde (GSA). The chain is Glutamyl-tRNA reductase from Desulforudis audaxviator (strain MP104C).